We begin with the raw amino-acid sequence, 107 residues long: Large ribosomal subunit protein bL21 (107 aa).

Belongs to the bacterial ribosomal protein bL21 family. In terms of assembly, part of the 50S ribosomal subunit. Contacts protein L20.

In terms of biological role, this protein binds to 23S rRNA in the presence of protein L20. The chain is Large ribosomal subunit protein bL21 from Chlamydia muridarum (strain MoPn / Nigg).